The primary structure comprises 370 residues: Adaptive-response sensory kinase SasA (370 aa).

The Histidine kinase domain maps to 152-365; the sequence is MVAHELRTPL…CFYLTVPVWQ (214 aa). At H155 the chain carries Phosphohistidine; by autocatalysis.

As to quaternary structure, homooligomerizes. Interacts with KaiC. Participates in the KaiBC complex, whose core is composed of a KaiC homohexamer and 6 KaiB.

It catalyses the reaction ATP + protein L-histidine = ADP + protein N-phospho-L-histidine.. In terms of biological role, member of the two-component regulatory system SasA/RpaA involved in genome-wide circadian gene expression. One of several clock output pathways. Participates in the Kai clock protein complex, the main circadian regulator in cyanobacteria, via its interaction with KaiC. KaiC enhances the autophosphorylation activity of SasA, which then transfers its phosphate group to RpaA to activate it. In addition to its output function, recruits fold-shifted KaiB (KaiB(fs)) to KaiC to cooperatively form the KaiB(6):KaiC(6) complex (independent of SasA kinase activity). Required for robustness of the circadian rhythm of gene expression and is involved in clock output, also required for adaptation to light/dark cycles. In Prochlorococcus marinus (strain MIT 9313), this protein is Adaptive-response sensory kinase SasA.